Consider the following 60-residue polypeptide: Potassium channel toxin alpha-KTx 29.2 (60 aa).

Positions 1–28 are cleaved as a signal peptide; sequence MKSVCGVLIILVVLTTMLSISTFSTVGA. Cystine bridges form between cysteine 32-cysteine 51, cysteine 40-cysteine 56, and cysteine 44-cysteine 58.

The protein belongs to the short scorpion toxin superfamily. Potassium channel inhibitor family. Alpha-KTx 29 subfamily. In terms of tissue distribution, expressed by the venom gland.

It localises to the secreted. In terms of biological role, weakly inhibits the Kv1.3/KCNA3 channel (1 uM of thetoxin inhibits currents by 13.2%) and Kv7.1/KCNQ1 channel (10 uM of the toxin inhibits currents by 27.7%). In Lychas mucronatus (Chinese swimming scorpion), this protein is Potassium channel toxin alpha-KTx 29.2.